Consider the following 508-residue polypeptide: Maturase K (508 aa).

The protein belongs to the intron maturase 2 family. MatK subfamily.

It localises to the plastid. The protein resides in the chloroplast. In terms of biological role, usually encoded in the trnK tRNA gene intron. Probably assists in splicing its own and other chloroplast group II introns. The protein is Maturase K of Marathrum schiedeanum.